The sequence spans 186 residues: Transposons Tn1721 resolvase (186 aa).

The region spanning 4-137 is the Resolvase/invertase-type recombinase catalytic domain; that stretch reads HRIGYVRVSS…EGIALAKQRG (134 aa). The active-site O-(5'-phospho-DNA)-serine intermediate is the serine 12. The segment at residues 164–183 is a DNA-binding region (H-T-H motif); the sequence is KAQLAREFNISRETLYQYLR.

It belongs to the site-specific recombinase resolvase family.

In terms of biological role, resolvase catalyzes the resolution (a site-specific recombination) of the cointegrated replicon to yield the final transposition products. The chain is Transposons Tn1721 resolvase (tnpR) from Escherichia coli.